The following is a 138-amino-acid chain: Odorant-binding protein 22 (138 aa).

A signal peptide spans 1 to 16; sequence MKVFIAVFALIAVAAA. (5Z,8Z,11Z,14Z)-eicosatetraenoate is bound at residue Arg30. (9Z)-hexadecenoate-binding residues include Arg30 and Tyr61. Residues Arg30 and Tyr61 each coordinate (9Z,12Z)-octadecadienoate. 3 disulfide bridges follow: Cys33/Cys64, Cys60/Cys113, and Cys103/Cys122. A glycan (N-linked (GlcNAc...) asparagine) is linked at Asn127.

This sequence belongs to the PBP/GOBP family. As to quaternary structure, monomer in solution. As to expression, high-level expression in female mouth parts, particularly in the proboscis (at protein level). Moderate-level expression in female antenna (at protein level). Expressed in testis but not in the accessory gland or ejaculatory duct (at protein level). Expressed in spermathecae (at protein level). Female salivary gland. Female chemosensory organs: antenna, palp and proboscis. Not detected in midgut.

Its subcellular location is the secreted. Its function is as follows. Involved in modulation of blood-feeding behavior and capacity in female mosquitoes. Required for normal oviposition. Required for normal fecundity and fertility of female and male mosquitoes. Required for normal expression of VGA1 gene, which encodes the egg yolk protein vitellogenin-A1. Involved in regulation of spermatozoa development. Required for normal female longevity when mosquitoes are maintained on regular sugar meal. Binds long chain fatty acids. (Microbial infection) Facilitates shedding of dengue virus type 2 particles into mosquito saliva. Does not affect dengue virus type 2 replication or infection prevalence in midgut and salivary glands at 14 days after blood feeding. In terms of biological role, (Microbial infection) Facilitates shedding of Zika virus particles into mosquito saliva. Does not affect Zika virus replication or infection prevalence in midgut and salivary glands at 14 days after blood feeding. The protein is Odorant-binding protein 22 of Aedes aegypti (Yellowfever mosquito).